A 197-amino-acid chain; its full sequence is dTTP/UTP pyrophosphatase (197 aa).

Asp70 serves as the catalytic Proton acceptor.

Belongs to the Maf family. YhdE subfamily. It depends on a divalent metal cation as a cofactor.

The protein resides in the cytoplasm. It catalyses the reaction dTTP + H2O = dTMP + diphosphate + H(+). The enzyme catalyses UTP + H2O = UMP + diphosphate + H(+). Functionally, nucleoside triphosphate pyrophosphatase that hydrolyzes dTTP and UTP. May have a dual role in cell division arrest and in preventing the incorporation of modified nucleotides into cellular nucleic acids. This chain is dTTP/UTP pyrophosphatase, found in Pectobacterium atrosepticum (strain SCRI 1043 / ATCC BAA-672) (Erwinia carotovora subsp. atroseptica).